The chain runs to 154 residues: Protein X (154 aa).

Residues 68–117 (PCALRFTSARRMETTVNAHRNLPKVLHKRTLGLSAMSTTDLEAHFKDCVF) are mitochondrial targeting sequence.

It belongs to the orthohepadnavirus protein X family. May form homodimer. May interact with host CEBPA, CFLAR, CREB1, DDB1, E4F1, HBXIP, HSPD1/HSP60, NFKBIA, POLR2E and SMAD4. Interacts with host SMC5-SMC6 complex and induces its degradation. Interacts with host TRPC4AP; leading to prevent ubiquitination of TRPC4AP. Interacts with host PLSCR1; this interaction promotes ubiquitination and degradation of HBx and impairs HBx-mediated cell proliferation. In terms of processing, a fraction may be phosphorylated in insect cells and HepG2 cells, a human hepatoblastoma cell line. Phosphorylated in vitro by host protein kinase C or mitogen-activated protein kinase. N-acetylated in insect cells.

It is found in the host cytoplasm. Its subcellular location is the host nucleus. The protein localises to the host mitochondrion. Multifunctional protein that plays a role in silencing host antiviral defenses and promoting viral transcription. Does not seem to be essential for HBV infection. May be directly involved in development of cirrhosis and liver cancer (hepatocellular carcinoma). Most of cytosolic activities involve modulation of cytosolic calcium. The effect on apoptosis is controversial depending on the cell types in which the studies have been conducted. May induce apoptosis by localizing in mitochondria and causing loss of mitochondrial membrane potential. May also modulate apoptosis by binding host CFLAR, a key regulator of the death-inducing signaling complex (DISC). Promotes viral transcription by using the host E3 ubiquitin ligase DDB1 to target the SMC5-SMC6 complex to proteasomal degradation. This host complex would otherwise bind to viral episomal DNA, and prevents its transcription. Moderately stimulates transcription of many different viral and cellular transcription elements. Promoters and enhancers stimulated by HBx contain DNA binding sites for NF-kappa-B, AP-1, AP-2, c-EBP, ATF/CREB, or the calcium-activated factor NF-AT. The protein is Protein X of Hepatitis B virus genotype B2 (isolate Indonesia/pIDW420/1988) (HBV-B).